Reading from the N-terminus, the 856-residue chain is Envelope glycoprotein gp150 (856 aa).

At 1-785 the chain is on the extracellular side; sequence MAEGFVANGQ…WIGNIPQYLK (785 aa). Residues asparagine 220, asparagine 258, asparagine 269, asparagine 274, asparagine 298, asparagine 330, asparagine 336, asparagine 342, asparagine 418, asparagine 422, asparagine 448, asparagine 469, asparagine 481, asparagine 499, asparagine 518, asparagine 531, asparagine 548, asparagine 551, and asparagine 556 are each glycosylated (N-linked (GlcNAc...) asparagine; by host). Residues 616 to 636 are fusion peptide; the sequence is VMLALATVLSMAGAGTGATAI. Positions 643-693 form a coiled coil; that stretch reads HQVLATQQEAIEKVTEALKITNLRLVTLEHQVLVIGLKVEAMEKFLYTAFA. Residues 662-680 are immunosuppression; it reads ITNLRLVTLEHQVLVIGLK. Asparagine 717, asparagine 721, asparagine 729, and asparagine 737 each carry an N-linked (GlcNAc...) asparagine; by host glycan. Positions 736 to 772 form a coiled coil; it reads YNQTKDLQKKFYGIIMDIEQNNVQGKKGLQQLQKWED. A helical membrane pass occupies residues 786 to 806; it reads GLLGSIVGIGLGILLLILCLP. The Cytoplasmic portion of the chain corresponds to 807 to 856; it reads TLVDCIRNCIHKILGYTVIAMPEVDGEEIQPQMELRRNGRQCGMSEKEEE.

As to quaternary structure, the mature envelope protein (Env) consists of a trimer of SU-TM heterodimers attached by noncovalent interactions or by a labile interchain disulfide bond. Post-translationally, specific enzymatic cleavages in vivo yield mature proteins. Envelope glycoproteins are synthesized as an inactive precursor that is N-glycosylated and processed likely by host cell furin or by a furin-like protease in the Golgi to yield the mature SU and TM proteins. The cleavage site between SU and TM requires the minimal sequence [KR]-X-[KR]-R.

Its subcellular location is the virion membrane. It localises to the host cell membrane. Its function is as follows. The surface protein (SU) attaches the virus to the host cell by binding to its receptor. This interaction triggers the refolding of the transmembrane protein (TM) and is thought to activate its fusogenic potential by unmasking its fusion peptide. Fusion occurs at the host cell plasma membrane. The transmembrane protein (TM) acts as a class I viral fusion protein. Under the current model, the protein has at least 3 conformational states: pre-fusion native state, pre-hairpin intermediate state, and post-fusion hairpin state. During viral and target cell membrane fusion, the coiled coil regions (heptad repeats) assume a trimer-of-hairpins structure, positioning the fusion peptide in close proximity to the C-terminal region of the ectodomain. The formation of this structure appears to drive apposition and subsequent fusion of viral and target cell membranes. Membranes fusion leads to delivery of the nucleocapsid into the cytoplasm. This chain is Envelope glycoprotein gp150 (env), found in Feline immunodeficiency virus (strain UT-113) (FIV).